A 302-amino-acid polypeptide reads, in one-letter code: Acetyl-coenzyme A carboxylase carboxyl transferase subunit beta (302 aa).

The CoA carboxyltransferase N-terminal domain maps to 25–294; the sequence is VWTKCDSCGQ…PQEDIVTEAA (270 aa). Zn(2+)-binding residues include cysteine 29, cysteine 32, cysteine 48, and cysteine 51. Residues 29-51 form a C4-type zinc finger; the sequence is CDSCGQVLYRAELERNLEVCPKC.

This sequence belongs to the AccD/PCCB family. As to quaternary structure, acetyl-CoA carboxylase is a heterohexamer composed of biotin carboxyl carrier protein (AccB), biotin carboxylase (AccC) and two subunits each of ACCase subunit alpha (AccA) and ACCase subunit beta (AccD). Requires Zn(2+) as cofactor.

It localises to the cytoplasm. The enzyme catalyses N(6)-carboxybiotinyl-L-lysyl-[protein] + acetyl-CoA = N(6)-biotinyl-L-lysyl-[protein] + malonyl-CoA. The protein operates within lipid metabolism; malonyl-CoA biosynthesis; malonyl-CoA from acetyl-CoA: step 1/1. Its function is as follows. Component of the acetyl coenzyme A carboxylase (ACC) complex. Biotin carboxylase (BC) catalyzes the carboxylation of biotin on its carrier protein (BCCP) and then the CO(2) group is transferred by the transcarboxylase to acetyl-CoA to form malonyl-CoA. This chain is Acetyl-coenzyme A carboxylase carboxyl transferase subunit beta, found in Erwinia tasmaniensis (strain DSM 17950 / CFBP 7177 / CIP 109463 / NCPPB 4357 / Et1/99).